A 154-amino-acid polypeptide reads, in one-letter code: Cyanate hydratase (154 aa).

Residues Arg100, Glu103, and Ser126 contribute to the active site.

Belongs to the cyanase family.

It carries out the reaction cyanate + hydrogencarbonate + 3 H(+) = NH4(+) + 2 CO2. Its function is as follows. Catalyzes the reaction of cyanate with bicarbonate to produce ammonia and carbon dioxide. This is Cyanate hydratase from Aspergillus terreus (strain NIH 2624 / FGSC A1156).